The chain runs to 352 residues: Heat-inducible transcription repressor HrcA (352 aa).

Belongs to the HrcA family.

Negative regulator of class I heat shock genes (grpE-dnaK-dnaJ and groELS operons). Prevents heat-shock induction of these operons. The protein is Heat-inducible transcription repressor HrcA of Latilactobacillus sakei subsp. sakei (strain 23K) (Lactobacillus sakei subsp. sakei).